The sequence spans 634 residues: MAVIGIDLGTTNSCVAVMEGGDAKAIENSEGARTTPSIVAFTDSERLVGDPAKRQATTNAKNTIYASKRLIGRRYQDVKDIKSSYEVVSAKNGDAWIKVLGKEYSPSQIGAFVLEKMKETAERHLGHKVEKAVITVPAYFNDAQRQATKDAGKIAGLDVIRIINEPTAAALAYGLNKSDKQKVIAVYDLGGGTFDVSILEIADGVFEVKATNGDTMLGGEDFDHAIMDYLMDDFKKTTGIDLHNDAMAVQRIKEASEKAKIELSNRMETDINLPFISSDSTGPKHLSLKLTRAKFENLVDDLIQRTIEPCKKALKDAGISADKIDEVVLVGGMTRVPKVIQKVKEFFGREPHKGVNPDEVVAIGAAIQGSILAGDVRDVLLLDVTPLSLGIETLGGVFTPLIERNTTIPTKKSQVFSTAEDGQTAVTIKVYQGERKMAADNKLLGQFSLEGIPSAPRGMPQIEVTFDIDANGIVHVSAKDKASGKEQAIKIQSSGGLSDDEIQRMIKEAEQKAGEDEKRKKFIELKNNGENLVHSTEKSLNEYGDKIPNSDRLEIENAIRDVRDALGNSDVESVDILQQKVDHLMKVSMKLGEALYGNANNTSSTESTTTNNNNEEDSKVVDSDYQEIDKKDGK.

Position 193 is a phosphothreonine; by autocatalysis (threonine 193). A disordered region spans residues 597–634 (GNANNTSSTESTTTNNNNEEDSKVVDSDYQEIDKKDGK). Low complexity predominate over residues 600-613 (NNTSSTESTTTNNN). The segment covering 616 to 634 (EDSKVVDSDYQEIDKKDGK) has biased composition (basic and acidic residues).

The protein belongs to the heat shock protein 70 family.

In terms of biological role, acts as a chaperone. In Ehrlichia canis (strain Jake), this protein is Chaperone protein DnaK.